The following is a 202-amino-acid chain: ATP-dependent Clp protease proteolytic subunit (202 aa).

The active-site Nucleophile is the serine 107. The active site involves histidine 132.

Belongs to the peptidase S14 family. Fourteen ClpP subunits assemble into 2 heptameric rings which stack back to back to give a disk-like structure with a central cavity, resembling the structure of eukaryotic proteasomes.

It is found in the cytoplasm. The enzyme catalyses Hydrolysis of proteins to small peptides in the presence of ATP and magnesium. alpha-casein is the usual test substrate. In the absence of ATP, only oligopeptides shorter than five residues are hydrolyzed (such as succinyl-Leu-Tyr-|-NHMec, and Leu-Tyr-Leu-|-Tyr-Trp, in which cleavage of the -Tyr-|-Leu- and -Tyr-|-Trp bonds also occurs).. Its function is as follows. Cleaves peptides in various proteins in a process that requires ATP hydrolysis. Has a chymotrypsin-like activity. Plays a major role in the degradation of misfolded proteins. The protein is ATP-dependent Clp protease proteolytic subunit of Shewanella amazonensis (strain ATCC BAA-1098 / SB2B).